The sequence spans 282 residues: Phosphate import ATP-binding protein PstB (282 aa).

Over residues 1-10 (MNMAESHLDP) the composition is skewed to basic and acidic residues. The segment at 1–24 (MNMAESHLDPSKLATGPAGAGAAT) is disordered. The span at 14 to 24 (ATGPAGAGAAT) shows a compositional bias: low complexity. One can recognise an ABC transporter domain in the interval 36–277 (IEVKNLNFFY…PARKETEDYI (242 aa)). 68–75 (GPSGCGKS) is a binding site for ATP.

This sequence belongs to the ABC transporter superfamily. Phosphate importer (TC 3.A.1.7) family. In terms of assembly, the complex is composed of two ATP-binding proteins (PstB), two transmembrane proteins (PstC and PstA) and a solute-binding protein (PstS).

It localises to the cell inner membrane. It carries out the reaction phosphate(out) + ATP + H2O = ADP + 2 phosphate(in) + H(+). Its function is as follows. Part of the ABC transporter complex PstSACB involved in phosphate import. Responsible for energy coupling to the transport system. The sequence is that of Phosphate import ATP-binding protein PstB from Burkholderia thailandensis (strain ATCC 700388 / DSM 13276 / CCUG 48851 / CIP 106301 / E264).